The primary structure comprises 186 residues: MASYQNRPGGQATDEYGNPIQQQYDEYGNPMGGGGYGTGGGGGATGGQGYGTGGQGYGSGGQGYGTGGQGYGTGTGTEGFGTGGGARHHGQEQLHKESGGGLGGMLHRSGSGSSSSSEDDGQGGRRKKGITQKIKEKLPGHHDQSGQAQAMGGMGSGYDAGGYGGEHHEKKGMMDKIKEKLPGGGR.

The tract at residues 1–186 (MASYQNRPGG…IKEKLPGGGR (186 aa)) is disordered. Gly residues predominate over residues 30–85 (PMGGGGYGTGGGGGATGGQGYGTGGQGYGSGGQGYGTGGQGYGTGTGTEGFGTGGG). Positions 89–98 (HGQEQLHKES) are enriched in basic and acidic residues. Positions 105-116 (MLHRSGSGSSSS) are enriched in low complexity. The segment covering 133–144 (KIKEKLPGHHDQ) has biased composition (basic and acidic residues). Gly residues predominate over residues 152–164 (GGMGSGYDAGGYG). A compositionally biased stretch (basic and acidic residues) spans 165–186 (GEHHEKKGMMDKIKEKLPGGGR).

Belongs to the plant dehydrin family.

The chain is Dehydrin Rab18 (RAB18) from Arabidopsis thaliana (Mouse-ear cress).